Here is a 626-residue protein sequence, read N- to C-terminus: Transketolase-like protein 2 (626 aa).

Substrate is bound at residue H37. Thiamine diphosphate contacts are provided by residues S40, H77, and 123-125 (GSL). A Mg(2+)-binding site is contributed by D155. Positions 156 and 185 each coordinate thiamine diphosphate. Mg(2+) is bound by residues N185 and L187. Positions 247 and 261 each coordinate thiamine diphosphate. Substrate-binding residues include H261 and S348. E369 and F395 together coordinate thiamine diphosphate. The Proton donor role is filled by E369. Substrate contacts are provided by H419 and D427. Residue Q431 participates in thiamine diphosphate binding. Residue R477 participates in substrate binding.

The protein belongs to the transketolase family. In terms of assembly, homodimer. The cofactor is Mg(2+). Requires Ca(2+) as cofactor. Mn(2+) is required as a cofactor. It depends on Co(2+) as a cofactor. Thiamine diphosphate serves as cofactor.

The catalysed reaction is D-sedoheptulose 7-phosphate + D-glyceraldehyde 3-phosphate = aldehydo-D-ribose 5-phosphate + D-xylulose 5-phosphate. Plays an essential role in total transketolase activity and cell proliferation in cancer cells; after transfection with anti-TKTL1 siRNA, total transketolase activity dramatically decreases and proliferation was significantly inhibited in cancer cells. Plays a pivotal role in carcinogenesis. The protein is Transketolase-like protein 2 (TKTL2) of Bos taurus (Bovine).